The primary structure comprises 339 residues: UPF0324 membrane protein SpyM3_0740 (339 aa).

The next 9 helical transmembrane spans lie at Lys-7 to Leu-24, Phe-28 to His-50, Gly-57 to Leu-79, Ala-84 to Gly-106, Ala-118 to Ile-140, Ala-150 to Leu-172, Phe-256 to Val-275, Phe-290 to Leu-307, and Ala-314 to Leu-336.

It belongs to the UPF0324 family.

It is found in the cell membrane. This chain is UPF0324 membrane protein SpyM3_0740, found in Streptococcus pyogenes serotype M3 (strain ATCC BAA-595 / MGAS315).